The chain runs to 105 residues: Large ribosomal subunit protein uL24 (105 aa).

It belongs to the universal ribosomal protein uL24 family. As to quaternary structure, part of the 50S ribosomal subunit.

Its function is as follows. One of two assembly initiator proteins, it binds directly to the 5'-end of the 23S rRNA, where it nucleates assembly of the 50S subunit. In terms of biological role, one of the proteins that surrounds the polypeptide exit tunnel on the outside of the subunit. The chain is Large ribosomal subunit protein uL24 from Psychrobacter sp. (strain PRwf-1).